The sequence spans 138 residues: Host cell factor C1 regulator 1 (138 aa).

Residues D76 to Y79 are interaction with HCFC1. Residues I110–L119 carry the Nuclear export signal motif.

As to quaternary structure, interacts with HCFC1. Widely expressed.

The protein resides in the cytoplasm. Its subcellular location is the nucleus. Its function is as follows. Regulates HCFC1 activity by modulating its subcellular localization. Overexpression of HCFC1R1 leads to accumulation of HCFC1 in the cytoplasm. HCFC1R1-mediated export may provide the pool of cytoplasmic HCFC1 required for import of virion-derived VP16 into the nucleus. This is Host cell factor C1 regulator 1 (HCFC1R1) from Homo sapiens (Human).